A 412-amino-acid polypeptide reads, in one-letter code: Arginine biosynthesis bifunctional protein ArgJ (412 aa).

Positions 158, 184, 195, 284, 407, and 412 each coordinate substrate. T195 serves as the catalytic Nucleophile.

Belongs to the ArgJ family. In terms of assembly, heterotetramer of two alpha and two beta chains.

It localises to the cytoplasm. It catalyses the reaction N(2)-acetyl-L-ornithine + L-glutamate = N-acetyl-L-glutamate + L-ornithine. The catalysed reaction is L-glutamate + acetyl-CoA = N-acetyl-L-glutamate + CoA + H(+). It participates in amino-acid biosynthesis; L-arginine biosynthesis; L-ornithine and N-acetyl-L-glutamate from L-glutamate and N(2)-acetyl-L-ornithine (cyclic): step 1/1. It functions in the pathway amino-acid biosynthesis; L-arginine biosynthesis; N(2)-acetyl-L-ornithine from L-glutamate: step 1/4. Its function is as follows. Catalyzes two activities which are involved in the cyclic version of arginine biosynthesis: the synthesis of N-acetylglutamate from glutamate and acetyl-CoA as the acetyl donor, and of ornithine by transacetylation between N(2)-acetylornithine and glutamate. The chain is Arginine biosynthesis bifunctional protein ArgJ from Bartonella quintana (strain Toulouse) (Rochalimaea quintana).